The following is a 64-amino-acid chain: MPKIKTHRGAAKRFKKTGTGKFRTKHAFLSHILEKKSAKRKRRLRKKFVLSAGDVRRIRAMIPY.

It belongs to the bacterial ribosomal protein bL35 family.

This chain is Large ribosomal subunit protein bL35, found in Desulforudis audaxviator (strain MP104C).